Here is a 273-residue protein sequence, read N- to C-terminus: Putative deoxyribonuclease TATDN1 homolog (273 aa).

A divalent metal cation-binding residues include Glu91, His125, His147, and Asp195.

Belongs to the metallo-dependent hydrolases superfamily. TatD-type hydrolase family. It depends on a divalent metal cation as a cofactor.

It localises to the nucleus. In terms of biological role, putative deoxyribonuclease. The protein is Putative deoxyribonuclease TATDN1 homolog of Encephalitozoon cuniculi (strain GB-M1) (Microsporidian parasite).